We begin with the raw amino-acid sequence, 223 residues long: Thiamine-phosphate synthase (223 aa).

4-amino-2-methyl-5-(diphosphooxymethyl)pyrimidine is bound by residues 45–49 (QYREK) and asparagine 77. Residues aspartate 78 and aspartate 97 each coordinate Mg(2+). Threonine 116 contacts 4-amino-2-methyl-5-(diphosphooxymethyl)pyrimidine. 142–144 (SYT) contacts 2-[(2R,5Z)-2-carboxy-4-methylthiazol-5(2H)-ylidene]ethyl phosphate. Lysine 145 is a binding site for 4-amino-2-methyl-5-(diphosphooxymethyl)pyrimidine. 2-[(2R,5Z)-2-carboxy-4-methylthiazol-5(2H)-ylidene]ethyl phosphate is bound by residues glycine 173 and 193–194 (VT).

Belongs to the thiamine-phosphate synthase family. It depends on Mg(2+) as a cofactor.

The enzyme catalyses 2-[(2R,5Z)-2-carboxy-4-methylthiazol-5(2H)-ylidene]ethyl phosphate + 4-amino-2-methyl-5-(diphosphooxymethyl)pyrimidine + 2 H(+) = thiamine phosphate + CO2 + diphosphate. It carries out the reaction 2-(2-carboxy-4-methylthiazol-5-yl)ethyl phosphate + 4-amino-2-methyl-5-(diphosphooxymethyl)pyrimidine + 2 H(+) = thiamine phosphate + CO2 + diphosphate. It catalyses the reaction 4-methyl-5-(2-phosphooxyethyl)-thiazole + 4-amino-2-methyl-5-(diphosphooxymethyl)pyrimidine + H(+) = thiamine phosphate + diphosphate. The protein operates within cofactor biosynthesis; thiamine diphosphate biosynthesis; thiamine phosphate from 4-amino-2-methyl-5-diphosphomethylpyrimidine and 4-methyl-5-(2-phosphoethyl)-thiazole: step 1/1. Condenses 4-methyl-5-(beta-hydroxyethyl)thiazole monophosphate (THZ-P) and 2-methyl-4-amino-5-hydroxymethyl pyrimidine pyrophosphate (HMP-PP) to form thiamine monophosphate (TMP). This chain is Thiamine-phosphate synthase, found in Dictyoglomus thermophilum (strain ATCC 35947 / DSM 3960 / H-6-12).